Here is a 153-residue protein sequence, read N- to C-terminus: Inner membrane protein YjiG (153 aa).

Over 1–31 (MTTQVRKNVMDMFIDGARRGFTIATTNLLPN) the chain is Periplasmic. A helical transmembrane segment spans residues 32 to 52 (VVMAFVIIQALKITGLLDWVG). Topologically, residues 53–68 (HICEPVMALWGLPGEA) are cytoplasmic. Transmembrane regions (helical) follow at residues 69 to 89 (ATVL…AASL) and 90 to 110 (ATAG…MYLM). The Cytoplasmic segment spans residues 111 to 132 (GNPVQNVGRCLGTAEVNAKYYP). Residues 133–153 (HIITVCVINALLSIWVMQLIV) traverse the membrane as a helical segment.

This sequence belongs to the SpmB family.

It is found in the cell inner membrane. This Escherichia coli O157:H7 protein is Inner membrane protein YjiG (yjiG).